Consider the following 470-residue polypeptide: Sulfate adenylyltransferase subunit 1 (470 aa).

The tr-type G domain maps to 22–238 (KELLRFITCG…ETIKIDYAYT (217 aa)). The tract at residues 31-38 (GSVDDGKS) is G1. 31–38 (GSVDDGKS) is a binding site for GTP. A G2 region spans residues 89 to 93 (GITID). The tract at residues 110–113 (DTPG) is G3. Residues 110 to 114 (DTPGH) and 165 to 168 (NKMD) each bind GTP. The G4 stretch occupies residues 165–168 (NKMD). The interval 202–204 (SAL) is G5.

Belongs to the TRAFAC class translation factor GTPase superfamily. Classic translation factor GTPase family. CysN/NodQ subfamily. Heterodimer composed of CysD, the smaller subunit, and CysN.

The catalysed reaction is sulfate + ATP + H(+) = adenosine 5'-phosphosulfate + diphosphate. Its pathway is sulfur metabolism; hydrogen sulfide biosynthesis; sulfite from sulfate: step 1/3. In terms of biological role, with CysD forms the ATP sulfurylase (ATPS) that catalyzes the adenylation of sulfate producing adenosine 5'-phosphosulfate (APS) and diphosphate, the first enzymatic step in sulfur assimilation pathway. APS synthesis involves the formation of a high-energy phosphoric-sulfuric acid anhydride bond driven by GTP hydrolysis by CysN coupled to ATP hydrolysis by CysD. In Francisella tularensis subsp. tularensis (strain WY96-3418), this protein is Sulfate adenylyltransferase subunit 1.